The chain runs to 223 residues: Deoxyribose-phosphate aldolase (223 aa).

D91 (proton donor/acceptor) is an active-site residue. Residue K153 is the Schiff-base intermediate with acetaldehyde of the active site. Catalysis depends on K182, which acts as the Proton donor/acceptor.

The protein belongs to the DeoC/FbaB aldolase family. DeoC type 1 subfamily.

It localises to the cytoplasm. It catalyses the reaction 2-deoxy-D-ribose 5-phosphate = D-glyceraldehyde 3-phosphate + acetaldehyde. Its pathway is carbohydrate degradation; 2-deoxy-D-ribose 1-phosphate degradation; D-glyceraldehyde 3-phosphate and acetaldehyde from 2-deoxy-alpha-D-ribose 1-phosphate: step 2/2. In terms of biological role, catalyzes a reversible aldol reaction between acetaldehyde and D-glyceraldehyde 3-phosphate to generate 2-deoxy-D-ribose 5-phosphate. The polypeptide is Deoxyribose-phosphate aldolase (Yersinia enterocolitica serotype O:8 / biotype 1B (strain NCTC 13174 / 8081)).